The primary structure comprises 958 residues: Dermatan-sulfate epimerase (958 aa).

The signal sequence occupies residues 1-22; sequence MRTHTRGAPSVFFIYLLCFVSA. Topologically, residues 23–902 are lumenal; that stretch reads YITDENPEVM…APSLSASYTR (880 aa). The N-linked (GlcNAc...) (complex) asparagine glycan is linked to N183. Residue H205 is the Proton donor of the active site. Y261 is an active-site residue. N336 carries N-linked (GlcNAc...) (high mannose) asparagine glycosylation. N411 is a glycosylation site (N-linked (GlcNAc...) (complex) asparagine). Residues H452 and E470 each contribute to the Mn(2+) site. Y473 is a catalytic residue. N481 contributes to the Mn(2+) binding site. Residue N642 is glycosylated (N-linked (GlcNAc...) (complex) asparagine). N648 carries an N-linked (GlcNAc...) (paucimannose) asparagine glycan. Residues 903–923 form a helical membrane-spanning segment; it reads LFLILNIAIFFVMLAMQLTYF. Over 924-933 the chain is Cytoplasmic; sequence QRAQSLHGQR. The helical transmembrane segment at 934-954 threads the bilayer; it reads CLYAVLLIDSCILLWLYSSCS. The Lumenal portion of the chain corresponds to 955 to 958; that stretch reads QSQC.

It belongs to the dermatan-sulfate isomerase family. Mn(2+) is required as a cofactor. Post-translationally, N-glycosylated. Glycosylation is important for enzymatic activity. As to expression, ubiquitously expressed with higher expression in kidney and ovary and lower expression in brain, colon and thymus. Also expressed in renal cell carcinomas, brain tumors, and in a part of melanomas and adenocarcinomas from organs other than the breast. Expressed in squamous cell carcinomas (SCC), glioma, and some adenocarcinoma cell lines, but not in breast cancer cell lines or any normal tissues (at protein level).

It localises to the endoplasmic reticulum membrane. It is found in the golgi apparatus membrane. Its subcellular location is the cytoplasmic vesicle membrane. The protein localises to the microsome membrane. It catalyses the reaction chondroitin 4'-sulfate = dermatan 4'-sulfate. The protein operates within glycan metabolism; chondroitin sulfate biosynthesis. It functions in the pathway glycan metabolism; heparan sulfate biosynthesis. Converts D-glucuronic acid to L-iduronic acid (IdoUA) residues. Plays an important role in the biosynthesis of the glycosaminoglycan/mucopolysaccharide dermatan sulfate. This chain is Dermatan-sulfate epimerase (DSE), found in Homo sapiens (Human).